We begin with the raw amino-acid sequence, 108 residues long: Small proline-rich protein 2H (108 aa).

The segment covering 1–11 (MSYQQQQCKQP) has biased composition (low complexity). The disordered stretch occupies residues 1–22 (MSYQQQQCKQPCQPPPVCPPPQ). Residues 12–22 (CQPPPVCPPPQ) are compositionally biased toward pro residues. A run of 7 repeats spans residues 21–29 (PQCPEPCPP), 30–38 (PKCPEPCPP), 39–47 (PKCTEPCPP), 48–56 (PKCPEPCPP), 57–65 (PKCPEPCPP), 66–74 (PKCPEPCPP), and 75–83 (PKCTEPCPP). The tract at residues 21 to 83 (PQCPEPCPPP…PPKCTEPCPP (63 aa)) is 7 X 9 AA tandem repeats of P-[KQ]-C-[PT]-E-P-C-P-P. Positions 83–108 (PPSYQQKCPSVQPSPPCQQKCPPKNK) are disordered. Positions 87-108 (QQKCPSVQPSPPCQQKCPPKNK) are enriched in low complexity.

It belongs to the cornifin (SPRR) family. Expressed weakly in uterus.

It is found in the cytoplasm. Functionally, cross-linked envelope protein of keratinocytes. It is a keratinocyte protein that first appears in the cell cytosol, but ultimately becomes cross-linked to membrane proteins by transglutaminase. All that results in the formation of an insoluble envelope beneath the plasma membrane. The chain is Small proline-rich protein 2H (Sprr2h) from Mus musculus (Mouse).